The sequence spans 715 residues: MTQHESANSQPSAFSLTFGDNGVAWLKIDVPNERMNTLQSAFVDQVTDVLAQLKDKKDIKGMVVYSGKPDNFIAGADIRMLAACQTADEAQQLAAKGQELFGQLEALPFHVVAAIHGPCLGGGLELALACHSRVCSDDDKTRLGLPEVQLGLLPGSGGTQRLPRLIGVANALDMILTGKQLRAKKAKNLGLVEEAVPLSILLDIAEKQALKGKPKRKGSFQEWAMGGNALGRSVVFDQAAKKTHEKTRGNYPAADAILDVIKYGLQHGMKKGLDQEAKRFGELVMTSESAALRSIFFATTAMKKESGSDALPATIKKVGVLGGGLMGGGISHVTATKAGYPVRIKDISNDGIKNALVYNFKLLDKQRKRRIISKAELQNKMFSITGGTTFTGFTNVDVVIEAVFEDINLKHQMVKDIEQQTSDYTIFASNTSSLPIHQIAAAAERPENVVGLHYFSPVEKMPLVEVIPHQGTENGSATSEQTIATVVALAKKQGKTPIVVADKAGFYVNRILAPYMNEAAAVLLSGEPIEHIDRSLLDFGFPVGPITLLDEVGVDIGAKISPILLAELGERFKAPDVFDLLLSDDRKGRKSGKGFYLYNTKKKEVDKSVYKLLSLEPEQKAAGQDIALRCTLMMLNEAARCLDEGVIKSARDGDIGAIFGIGFPPFLGGPFRYMDTLGAKRVVEMLKDHTDKYGGRFTPCDKLVAMANEEQSFYS.

The enoyl-CoA hydratase stretch occupies residues 8–197 (NSQPSAFSLT…NLGLVEEAVP (190 aa)). Positions 313–715 (ATIKKVGVLG…MANEEQSFYS (403 aa)) are 3-hydroxyacyl-CoA dehydrogenase.

It in the N-terminal section; belongs to the enoyl-CoA hydratase/isomerase family. The protein in the central section; belongs to the 3-hydroxyacyl-CoA dehydrogenase family. In terms of assembly, heterotetramer of two alpha chains (FadJ) and two beta chains (FadI).

It is found in the cytoplasm. The catalysed reaction is a (3S)-3-hydroxyacyl-CoA = a (2E)-enoyl-CoA + H2O. It carries out the reaction a 4-saturated-(3S)-3-hydroxyacyl-CoA = a (3E)-enoyl-CoA + H2O. The enzyme catalyses a (3S)-3-hydroxyacyl-CoA + NAD(+) = a 3-oxoacyl-CoA + NADH + H(+). It catalyses the reaction (3S)-3-hydroxybutanoyl-CoA = (3R)-3-hydroxybutanoyl-CoA. The protein operates within lipid metabolism; fatty acid beta-oxidation. In terms of biological role, catalyzes the formation of a hydroxyacyl-CoA by addition of water on enoyl-CoA. Also exhibits 3-hydroxyacyl-CoA epimerase and 3-hydroxyacyl-CoA dehydrogenase activities. The chain is Fatty acid oxidation complex subunit alpha from Photobacterium profundum (strain SS9).